Here is a 1203-residue protein sequence, read N- to C-terminus: DNA-directed RNA polymerase subunit beta (1203 aa).

Basic and acidic residues predominate over residues 1174-1195 (AAQEAKAAFEAEEAEKATKAEA). Residues 1174–1203 (AAQEAKAAFEAEEAEKATKAEATEEAAEQE) form a disordered region.

This sequence belongs to the RNA polymerase beta chain family. The RNAP catalytic core consists of 2 alpha, 1 beta, 1 beta' and 1 omega subunit. When a sigma factor is associated with the core the holoenzyme is formed, which can initiate transcription.

It catalyses the reaction RNA(n) + a ribonucleoside 5'-triphosphate = RNA(n+1) + diphosphate. Its function is as follows. DNA-dependent RNA polymerase catalyzes the transcription of DNA into RNA using the four ribonucleoside triphosphates as substrates. In Streptococcus pneumoniae (strain ATCC 700669 / Spain 23F-1), this protein is DNA-directed RNA polymerase subunit beta.